A 519-amino-acid chain; its full sequence is T-complex protein 11-like protein 2 (519 aa).

The segment at methionine 1–leucine 30 is disordered. Serine 16 is subject to Phosphoserine. Over residues aspartate 17–serine 29 the composition is skewed to low complexity.

It belongs to the TCP11 family. As to quaternary structure, interacts with FMNL2; this interaction promotes muscle-derived satellite cell (MDSC) migration and differentiation.

The protein resides in the cytoplasm. It is found in the cytoskeleton. Promotes the migration of muscle-derived satellite cells (MDSCs) during differentiation throught interaction with FMNL2 and therefore may participate in microfilament assembly. This is T-complex protein 11-like protein 2 from Homo sapiens (Human).